Here is a 333-residue protein sequence, read N- to C-terminus: Anthranilate phosphoribosyltransferase (333 aa).

5-phospho-alpha-D-ribose 1-diphosphate is bound by residues Gly-81, 84-85 (GD), Thr-89, 91-94 (NIST), 109-117 (KHGNRSVSS), and Ser-121. Gly-81 is an anthranilate binding site. Ser-93 provides a ligand contact to Mg(2+). Residue Asn-112 participates in anthranilate binding. Arg-167 contacts anthranilate. Residues Asp-225 and Glu-226 each coordinate Mg(2+).

It belongs to the anthranilate phosphoribosyltransferase family. As to quaternary structure, homodimer. The cofactor is Mg(2+).

The catalysed reaction is N-(5-phospho-beta-D-ribosyl)anthranilate + diphosphate = 5-phospho-alpha-D-ribose 1-diphosphate + anthranilate. The protein operates within amino-acid biosynthesis; L-tryptophan biosynthesis; L-tryptophan from chorismate: step 2/5. Functionally, catalyzes the transfer of the phosphoribosyl group of 5-phosphorylribose-1-pyrophosphate (PRPP) to anthranilate to yield N-(5'-phosphoribosyl)-anthranilate (PRA). This Glaesserella parasuis serovar 5 (strain SH0165) (Haemophilus parasuis) protein is Anthranilate phosphoribosyltransferase.